We begin with the raw amino-acid sequence, 833 residues long: Leucine--tRNA ligase (833 aa).

The 'HIGH' region signature appears at Pro41–His52. A 'KMSKS' region motif is present at residues Lys610–Ser614. An ATP-binding site is contributed by Lys613.

It belongs to the class-I aminoacyl-tRNA synthetase family.

Its subcellular location is the cytoplasm. The catalysed reaction is tRNA(Leu) + L-leucine + ATP = L-leucyl-tRNA(Leu) + AMP + diphosphate. The chain is Leucine--tRNA ligase from Streptococcus equi subsp. equi (strain 4047).